Reading from the N-terminus, the 502-residue chain is ATP synthase subunit alpha (502 aa).

Residues 119–139 (GPIATTKSRPIESPAPGVMDR) form a disordered region. ATP is bound at residue 169–176 (GDRQTGKT).

The protein belongs to the ATPase alpha/beta chains family. F-type ATPases have 2 components, CF(1) - the catalytic core - and CF(0) - the membrane proton channel. CF(1) has five subunits: alpha(3), beta(3), gamma(1), delta(1), epsilon(1). CF(0) has three main subunits: a(1), b(2) and c(9-12). The alpha and beta chains form an alternating ring which encloses part of the gamma chain. CF(1) is attached to CF(0) by a central stalk formed by the gamma and epsilon chains, while a peripheral stalk is formed by the delta and b chains.

The protein resides in the cell membrane. The enzyme catalyses ATP + H2O + 4 H(+)(in) = ADP + phosphate + 5 H(+)(out). Functionally, produces ATP from ADP in the presence of a proton gradient across the membrane. The alpha chain is a regulatory subunit. The protein is ATP synthase subunit alpha of Alkalihalophilus pseudofirmus (strain ATCC BAA-2126 / JCM 17055 / OF4) (Bacillus pseudofirmus).